The sequence spans 114 residues: Histone H3-7 (114 aa).

Basic residues predominate over residues 1–17; it reads NTGGKAPRKHIAHKQAK. The interval 1–32 is disordered; sequence NTGGKAPRKHIAHKQAKKSSAAAATGGVKKPH. Positions 18–28 are enriched in low complexity; sequence KSSAAAATGGV.

The protein belongs to the histone H3 family. The nucleosome is a histone octamer containing two molecules each of H2A, H2B, H3 and H4 assembled in one H3-H4 heterotetramer and two H2A-H2B heterodimers. The octamer wraps approximately 147 bp of DNA.

It localises to the nucleus. It is found in the chromosome. Its function is as follows. Core component of nucleosome. Nucleosomes wrap and compact DNA into chromatin, limiting DNA accessibility to the cellular machineries which require DNA as a template. Histones thereby play a central role in transcription regulation, DNA repair, DNA replication and chromosomal stability. DNA accessibility is regulated via a complex set of post-translational modifications of histones, also called histone code, and nucleosome remodeling. This Stylonychia lemnae (Ciliate) protein is Histone H3-7 (H3-7).